Reading from the N-terminus, the 723-residue chain is Polyribonucleotide nucleotidyltransferase (723 aa).

Residues Asp-497 and Asp-503 each coordinate Mg(2+). Residues 564 to 623 (PRLLSFRIDPELIGTVIGPGGRTIKGITERTNTKIDIEDGGIVTIASHDGAAAEAAQRII) enclose the KH domain. The S1 motif domain maps to 633 to 701 (GEVFTGTITR…NRGRINLTLR (69 aa)). Positions 701-723 (RGVPQNGEETQSEPAPTPVAPLN) are disordered.

This sequence belongs to the polyribonucleotide nucleotidyltransferase family. Mg(2+) is required as a cofactor.

It localises to the cytoplasm. The catalysed reaction is RNA(n+1) + phosphate = RNA(n) + a ribonucleoside 5'-diphosphate. In terms of biological role, involved in mRNA degradation. Catalyzes the phosphorolysis of single-stranded polyribonucleotides processively in the 3'- to 5'-direction. In Prochlorococcus marinus (strain MIT 9313), this protein is Polyribonucleotide nucleotidyltransferase.